A 249-amino-acid chain; its full sequence is 2,3-bisphosphoglycerate-dependent phosphoglycerate mutase (249 aa).

Residues arginine 9–asparagine 16, threonine 22–glycine 23, arginine 61, glutamate 88–tyrosine 91, lysine 99, arginine 115–arginine 116, and glycine 184–asparagine 185 each bind substrate. Histidine 10 functions as the Tele-phosphohistidine intermediate in the catalytic mechanism. Glutamate 88 (proton donor/acceptor) is an active-site residue.

This sequence belongs to the phosphoglycerate mutase family. BPG-dependent PGAM subfamily. As to quaternary structure, homodimer.

It catalyses the reaction (2R)-2-phosphoglycerate = (2R)-3-phosphoglycerate. It functions in the pathway carbohydrate degradation; glycolysis; pyruvate from D-glyceraldehyde 3-phosphate: step 3/5. Catalyzes the interconversion of 2-phosphoglycerate and 3-phosphoglycerate. The sequence is that of 2,3-bisphosphoglycerate-dependent phosphoglycerate mutase from Xanthomonas oryzae pv. oryzae (strain PXO99A).